Reading from the N-terminus, the 1167-residue chain is ATP-dependent helicase/nuclease subunit A (1167 aa).

Positions 2 to 451 constitute a UvrD-like helicase ATP-binding domain; sequence KNWTAEQMRA…IELSLNFRSR (450 aa). 23–30 is a binding site for ATP; sequence AAAGAGKT. Residues 478 to 768 form the UvrD-like helicase C-terminal domain; that stretch reads KAFLKKGADY…RVMSVHKSKG (291 aa).

Belongs to the helicase family. AddA subfamily. In terms of assembly, heterodimer of AddA and AddB/RexB. It depends on Mg(2+) as a cofactor.

The catalysed reaction is Couples ATP hydrolysis with the unwinding of duplex DNA by translocating in the 3'-5' direction.. The enzyme catalyses ATP + H2O = ADP + phosphate + H(+). In terms of biological role, the heterodimer acts as both an ATP-dependent DNA helicase and an ATP-dependent, dual-direction single-stranded exonuclease. Recognizes the chi site generating a DNA molecule suitable for the initiation of homologous recombination. The AddA nuclease domain is required for chi fragment generation; this subunit has the helicase and 3' -&gt; 5' nuclease activities. The chain is ATP-dependent helicase/nuclease subunit A from Carboxydothermus hydrogenoformans (strain ATCC BAA-161 / DSM 6008 / Z-2901).